Reading from the N-terminus, the 303-residue chain is DnaJ homolog subfamily C member 17 (303 aa).

Residues 11–76 (DLYALLGIEE…AARAAYDKVR (66 aa)) form the J domain. Disordered regions lie at residues 104–123 (ERQAQAHGSEEEEESRSATT) and 150–170 (IRQDREQRLRGRTENTEGKGT). The residue at position 112 (S112) is a Phosphoserine. Residues 150–166 (IRQDREQRLRGRTENTE) are compositionally biased toward basic and acidic residues. An RRM domain is found at 178–249 (KCKKEDESQG…NPLKVSWLEG (72 aa)). Position 264 is an N6-methyllysine (K264).

In terms of tissue distribution, expressed in the thyroid gland.

The protein resides in the cytoplasm. It is found in the nucleus. Its function is as follows. May negatively affect PAX8-induced thyroglobulin/TG transcription. In Mus musculus (Mouse), this protein is DnaJ homolog subfamily C member 17 (Dnajc17).